Reading from the N-terminus, the 93-residue chain is UPF0358 protein BBR47_22520 (93 aa).

The protein belongs to the UPF0358 family.

The protein is UPF0358 protein BBR47_22520 of Brevibacillus brevis (strain 47 / JCM 6285 / NBRC 100599).